The primary structure comprises 44 residues: Photosystem I reaction center subunit IX (44 aa).

Residues 7 to 27 traverse the membrane as a helical segment; it reads YLSVAPVISTLWFGSLAGLLI.

It belongs to the PsaJ family.

The protein localises to the plastid. Its subcellular location is the chloroplast thylakoid membrane. In terms of biological role, may help in the organization of the PsaE and PsaF subunits. The sequence is that of Photosystem I reaction center subunit IX from Ceratophyllum demersum (Rigid hornwort).